A 791-amino-acid polypeptide reads, in one-letter code: MEESSLEILEFDKIIDRVQEFAATIIGKEIISRLQPVDNLNYVKNKLREVSSAREILEEYGRPPFGGIRDLREIIEKADKGIVLSVKEVMDVRSTLEGVRELKKYSREIGTGIDDELQDIYSIITEKFDRLTPLKQLENEINRCIDEHGEIKDSASRKLRSIRREMDRIEGKINDKLNSIINNTRYQEMLQDKLVTIRGNRYVVPVKSSYKNTFSGIVHDQSTSGLTYFMEPMAIVKLNNRLGELKRAEEQEIYRILKKLSENIKEHTRDLSDNLEMVSLLDVDFARARFSIEIEGIEPGINDKGFINIRGGRHPLLKVKPVPIDITVGNEFKTLVITGPNTGGKTVALKTVGLFVLMVQAGLHIPAEEETVISIFNGVYADIGDEQSIEQNLSTFSSHINRIKRFLGKADARSLVLLDEIGVGTDPREGAALGVAILEHLRERGVTTIATTHYSEIKSYAYSQDGVENASVEFDMETLQPTYRLLMGIPGGSNAFEIALKLGLPHDIIKDGKELMSGDDIKVENIISDLNEERKKYEQLKIEIEERLEAVKKKEQKYDSLLTDLEKRKKKLITEAREEALQIIKKTRKESKEILRRLKNKEFASRSDIDRVENEINLNLKETEKEISEKRQNKDGRTRVKEISCGDQVRLKKTGQKGEVISVDREKGEAVIQAGIMKVTTGLDEVAKIDIPDDTKDELFHSYQVKKKSRVSPTLDLRGERYETAQHKLDKYLDDVFLAGLKQVEIIHGKGTGALRKAVHTVLEKNPHITSYRLGRQEEGGSGVTIADLKS.

An ATP-binding site is contributed by 339–346; it reads GPNTGGKT. The Smr domain occupies 715 to 790; sequence LDLRGERYET…GSGVTIADLK (76 aa).

It belongs to the DNA mismatch repair MutS family. MutS2 subfamily. As to quaternary structure, homodimer. Binds to stalled ribosomes, contacting rRNA.

In terms of biological role, endonuclease that is involved in the suppression of homologous recombination and thus may have a key role in the control of bacterial genetic diversity. Functionally, acts as a ribosome collision sensor, splitting the ribosome into its 2 subunits. Detects stalled/collided 70S ribosomes which it binds and splits by an ATP-hydrolysis driven conformational change. Acts upstream of the ribosome quality control system (RQC), a ribosome-associated complex that mediates the extraction of incompletely synthesized nascent chains from stalled ribosomes and their subsequent degradation. Probably generates substrates for RQC. The sequence is that of Endonuclease MutS2 from Halothermothrix orenii (strain H 168 / OCM 544 / DSM 9562).